The sequence spans 183 residues: MAAAMMNKSVLLNKQCGKPAAVPKVVMSKGGFARTSAVNKNRDMMVWQPFNNKMFETFSFLPPLTDEQISKQVDYILANSWTPCLEFAASDQAYAGNENCIRMGPVASTYQDNRYWTMWKLPMFGCTDGSQVLSEIQACTNAFPDAYIRLVCFDANRQVQISGFLVHRPPSATDYRLPADRQV.

The transit peptide at 1–42 (MAAAMMNKSVLLNKQCGKPAAVPKVVMSKGGFARTSAVNKNR) directs the protein to the chloroplast.

The protein belongs to the RuBisCO small chain family. As to quaternary structure, heterohexadecamer of 8 large and 8 small subunits.

Its subcellular location is the plastid. It is found in the chloroplast. RuBisCO catalyzes two reactions: the carboxylation of D-ribulose 1,5-bisphosphate, the primary event in carbon dioxide fixation, as well as the oxidative fragmentation of the pentose substrate. Both reactions occur simultaneously and in competition at the same active site. Although the small subunit is not catalytic it is essential for maximal activity. This chain is Ribulose bisphosphate carboxylase small subunit, chloroplastic 5, found in Acetabularia acetabulum (Mermaid's wine glass).